The following is a 152-amino-acid chain: ESAT-6 secretion machinery protein EssA (152 aa).

Residues 1 to 114 (MLMNSVIALT…PYIQNKQEKK (114 aa)) are Cytoplasmic-facing. Residues 115–135 (IFPYILMSVGAFLTLGFVIFS) form a helical membrane-spanning segment. At 136–152 (IHKGRRTKNESARKSNI) the chain is on the extracellular side.

This sequence belongs to the EssA family.

Its subcellular location is the cell membrane. Functionally, component of the ESAT-6 secretion system (Ess). Required for the secretion of EsxA. The chain is ESAT-6 secretion machinery protein EssA from Staphylococcus aureus (strain MRSA252).